We begin with the raw amino-acid sequence, 473 residues long: MAIITEEEEDPKTLNPPKNKPKDSDFTKSESTMKNPKPQSQNPFPFWFYFTVVVSLATIIFISLSLFSSQNDPRSWFLSLPPALRQHYSNGRTIKVQVNSNESPIEVFVAESGSIHTETVVIVHGLGLSSFAFKEMIQSLGSKGIHSVAIDLPGNGFSDKSMVVIGGDREIGFVARVKEVYGLIQEKGVFWAFDQMIETGDLPYEEIIKLQNSKRRSFKAIELGSEETARVLGQVIDTLGLAPVHLVLHDSALGLASNWVSENWQSVRSVTLIDSSISPALPLWVLNVPGIREILLAFSFGFEKLVSFRCSKEMTLSDIDAHRILLKGRNGREAVVASLNKLNHSFDIAQWGNSDGINGIPMQVIWSSEASKEWSDEGQRVAKALPKAKFVTHSGSRWPQESKSGELADYISEFVSLLPKSIRRVAEEPIPEEVQKVLEEAKAGDDHDHHHGHGHAHAGYSDAYGLGEEWTTT.

Acidic residues predominate over residues 1-10; that stretch reads MAIITEEEED. The tract at residues 1–38 is disordered; that stretch reads MAIITEEEEDPKTLNPPKNKPKDSDFTKSESTMKNPKP. The segment covering 29 to 38 has biased composition (polar residues); it reads SESTMKNPKP. The helical transmembrane segment at 44 to 64 threads the bilayer; it reads FPFWFYFTVVVSLATIIFISL. In terms of domain architecture, AB hydrolase-1 spans 119 to 283; that stretch reads TVVIVHGLGL…DSSISPALPL (165 aa).

In terms of tissue distribution, most abundant in root tissue, lesser amounts in rosette leaves, stems and flowers and very little in mature siliques.

It is found in the endoplasmic reticulum membrane. Required for the auxin influx facilitator AUX1 polar trafficking and its asymmetric localization within the plasma membrane. Not involved in the PIN proteins localization. The protein is Protein AUXIN RESPONSE 4 (AXR4) of Arabidopsis thaliana (Mouse-ear cress).